A 1007-amino-acid chain; its full sequence is Retinoblastoma-related protein (1007 aa).

Residues 406 to 604 (TPVTTAMTTA…EKGSSMYNSL (199 aa)) form a domain A region. Residues 406-856 (TPVTTAMTTA…NEIFIPAVKP (451 aa)) form a pocket region. The segment at 605-725 (IVARAALSAE…PGREGETCAE (121 aa)) is spacer. Positions 644 to 665 (PVPSLQKRESSPGQNGDIRSPK) are disordered. The domain B stretch occupies residues 726–856 (TGINIFFSKI…NEIFIPAVKP (131 aa)).

This sequence belongs to the retinoblastoma protein (RB) family.

It is found in the nucleus. Its function is as follows. Regulator of biological processes that recruits a histone deacetylase to control gene transcription. May play a role in the entry into mitosis, negatively regulating the cell proliferation. Formation of stable complexes with geminiviridae replication-associated proteins may create a cellular environment which favors viral DNA replication. The protein is Retinoblastoma-related protein (RBR) of Vitis vinifera (Grape).